The following is a 135-amino-acid chain: 30 kDa antigenic glycoprotein (135 aa).

Residues G1–S5 form the signal peptide. 4 N-linked (GlcNAc...) asparagine glycosylation sites follow: N22, N31, N57, and N73.

The protein to H.contortus 15 kDa excretory/secretory protein.

It localises to the secreted. In Trichostrongylus colubriformis (Black scour worm), this protein is 30 kDa antigenic glycoprotein.